The following is a 698-amino-acid chain: Polyribonucleotide nucleotidyltransferase (698 aa).

Residues Asp-485 and Asp-491 each contribute to the Mg(2+) site. Residues 552-611 (PRIHTIKINTDKIRDVIGKGGAVIRSLCEETGTTIEIEDDGTVKIAATSGEQADDAINRI) enclose the KH domain. Residues 621-689 (GTIYTGKVVR…RQGRVRLSIK (69 aa)) form the S1 motif domain.

It belongs to the polyribonucleotide nucleotidyltransferase family. As to quaternary structure, component of the RNA degradosome, which is a multiprotein complex involved in RNA processing and mRNA degradation. Mg(2+) serves as cofactor.

It is found in the cytoplasm. It catalyses the reaction RNA(n+1) + phosphate = RNA(n) + a ribonucleoside 5'-diphosphate. Its function is as follows. Involved in mRNA degradation. Catalyzes the phosphorolysis of single-stranded polyribonucleotides processively in the 3'- to 5'-direction. This chain is Polyribonucleotide nucleotidyltransferase, found in Psychromonas ingrahamii (strain DSM 17664 / CCUG 51855 / 37).